Here is a 768-residue protein sequence, read N- to C-terminus: Actin filament-associated protein 1-like 1 (768 aa).

The disordered stretch occupies residues 82–145 (DLRDMPEDDG…GKSPEYISSH (64 aa)). A phosphoserine mark is found at S94, S98, S104, and S153. The interval 173 to 211 (GELKSSYNDSDAMSSSYESYDEEEEEGKSPQPRHQWPSE) is disordered. Residues 177-190 (SSYNDSDAMSSSYE) show a composition bias toward low complexity. The region spanning 220–316 (ECRICAFLLR…WLKVIREVSK (97 aa)) is the PH 1 domain. Residues S329 and S343 each carry the phosphoserine modification. Residues 418-512 (EVPCCGYLNV…WLGLLLVEMG (95 aa)) form the PH 2 domain. Y557 carries the phosphotyrosine modification. Positions 566–604 (QDEEPERPTGAQVKRHASSCSEKSHRVDPQVKVKRHASS) are disordered. The span at 587 to 596 (EKSHRVDPQV) shows a compositional bias: basic and acidic residues. Residues 611 to 700 (GKNRAEEDAR…VAVKERLQQS (90 aa)) adopt a coiled-coil conformation. A disordered region spans residues 705 to 768 (PALGLSVSSK…KAKEWEMKKT (64 aa)). The span at 710–729 (SVSSKPKSGETANKPQNSVP) shows a compositional bias: polar residues. Phosphoserine is present on S747. Residues 759-768 (KAKEWEMKKT) show a composition bias toward basic and acidic residues.

As to quaternary structure, interacts with CTTN. Expressed in breast, colon and brain. In all 3 tissues, expressed in the microvasculature (at protein level). In addition, in the breast, found in the contractile myoepithelial cell layer which surrounds the breast ducts (at protein level). In the colon, expressed in the mucous membrane and colonic crypts and in the smooth muscle cell layer which provide movement of the colon (at protein level). In the cerebellum, localized around the Purkinje neurons and the granule cells of the granular layer, but not inside cell bodies (at protein level). Outside of the cerebellar cortex, expressed in glial cells (at protein level). Highly expressed away from the cell bodies within the dentate nucleus (at protein level).

The protein localises to the cytoplasm. It is found in the cell projection. The protein resides in the podosome. It localises to the invadopodium. Its subcellular location is the cytoskeleton. The protein localises to the stress fiber. Its function is as follows. May be involved in podosome and invadosome formation. The protein is Actin filament-associated protein 1-like 1 (AFAP1L1) of Homo sapiens (Human).